A 170-amino-acid chain; its full sequence is Adenine phosphoribosyltransferase (170 aa).

The protein belongs to the purine/pyrimidine phosphoribosyltransferase family. In terms of assembly, homodimer.

It is found in the cytoplasm. It catalyses the reaction AMP + diphosphate = 5-phospho-alpha-D-ribose 1-diphosphate + adenine. The protein operates within purine metabolism; AMP biosynthesis via salvage pathway; AMP from adenine: step 1/1. In terms of biological role, catalyzes a salvage reaction resulting in the formation of AMP, that is energically less costly than de novo synthesis. The protein is Adenine phosphoribosyltransferase of Streptococcus pneumoniae (strain Taiwan19F-14).